The sequence spans 623 residues: Laccase-1 (623 aa).

The N-terminal stretch at 1–22 (MKTFTSALALVVGMLAPGAVVA) is a signal peptide. The propeptide occupies 23-50 (APPSTPAQRDLVELREARQEGGKDLRPR). C54 and C62 are joined by a disulfide. 2 N-linked (GlcNAc...) asparagine glycosylation sites follow: N89 and N138. Cu cation-binding residues include H143, H145, H188, and H190. Disulfide bonds link C164–C590 and C348–C382. Residues N251, N266, N294, and N339 are each glycosylated (N-linked (GlcNAc...) asparagine). N426 and N446 each carry an N-linked (GlcNAc...) asparagine glycan. Positions 481, 484, 486, 552, 553, 554, and 558 each coordinate Cu cation. The propeptide occupies 610–623 (KRRRWVEESEWLVR).

The protein belongs to the multicopper oxidase family. Monomer. Cu cation is required as a cofactor. In terms of tissue distribution, secreted protein; extracellular space.

It catalyses the reaction 4 hydroquinone + O2 = 4 benzosemiquinone + 2 H2O. Lignin degradation and detoxification of lignin-derived products. This Melanocarpus albomyces protein is Laccase-1 (LAC1).